A 457-amino-acid chain; its full sequence is MDHLPIFCQLRHRDCLLVGGGDVAERKARLLLEAGARLTVNALAFDPQFNVWAQEGMLTLVQGEFDESLLDTCWLTIAATDDDDVNQRVSDACEIRRIFCNVVDAPKEASFIMPSIIDRSPLMVAVSSGGTSPVLARLLREKLEAILPQHLGQVARYAGQLRARVKTTFATIGERRRFWEKFFVNDRLAQSLANQDQQAVEETTERLLTEPLNHRGEVVLVGAGPGDAGLLTLKGLQQIQQADIVVYDRLVSDDIMNLVRRDADRVFVGKRAGYHCVPQEEINQILLREALKGKRVVRLKGGDPFIFGRGGEELETLCNAGVPFSVVPGITAASGCSAYSGIPLTHRDYAQSVRLVTGHLKTGSELDWHNLAAEKQTLVFYMGLNQAATIQEKLLEHGMQHDMPVALVENGTAITQRVVSGVLTQLGELAKQVESPALIVVGRVVELREKLNWFSNH.

The tract at residues 1–204 (MDHLPIFCQL…QDQQAVEETT (204 aa)) is precorrin-2 dehydrogenase /sirohydrochlorin ferrochelatase. NAD(+) is bound by residues 22–23 (DV) and 43–44 (LA). Ser-128 bears the Phosphoserine mark. The segment at 216-457 (GEVVLVGAGP…REKLNWFSNH (242 aa)) is uroporphyrinogen-III C-methyltransferase. Pro-225 lines the S-adenosyl-L-methionine pocket. The active-site Proton acceptor is the Asp-248. The Proton donor role is filled by Lys-270. Residues 301 to 303 (GGD), Ile-306, 331 to 332 (TA), Met-382, and Gly-411 each bind S-adenosyl-L-methionine.

In the N-terminal section; belongs to the precorrin-2 dehydrogenase / sirohydrochlorin ferrochelatase family. It in the C-terminal section; belongs to the precorrin methyltransferase family.

It carries out the reaction uroporphyrinogen III + 2 S-adenosyl-L-methionine = precorrin-2 + 2 S-adenosyl-L-homocysteine + H(+). The enzyme catalyses precorrin-2 + NAD(+) = sirohydrochlorin + NADH + 2 H(+). The catalysed reaction is siroheme + 2 H(+) = sirohydrochlorin + Fe(2+). The protein operates within cofactor biosynthesis; adenosylcobalamin biosynthesis; precorrin-2 from uroporphyrinogen III: step 1/1. It functions in the pathway cofactor biosynthesis; adenosylcobalamin biosynthesis; sirohydrochlorin from precorrin-2: step 1/1. Its pathway is porphyrin-containing compound metabolism; siroheme biosynthesis; precorrin-2 from uroporphyrinogen III: step 1/1. It participates in porphyrin-containing compound metabolism; siroheme biosynthesis; siroheme from sirohydrochlorin: step 1/1. The protein operates within porphyrin-containing compound metabolism; siroheme biosynthesis; sirohydrochlorin from precorrin-2: step 1/1. Multifunctional enzyme that catalyzes the SAM-dependent methylations of uroporphyrinogen III at position C-2 and C-7 to form precorrin-2 via precorrin-1. Then it catalyzes the NAD-dependent ring dehydrogenation of precorrin-2 to yield sirohydrochlorin. Finally, it catalyzes the ferrochelation of sirohydrochlorin to yield siroheme. The sequence is that of Siroheme synthase from Enterobacter sp. (strain 638).